The chain runs to 2472 residues: Spectrin alpha chain, non-erythrocytic 1 (2472 aa).

Met-1 is modified (N-acetylmethionine). 9 Spectrin repeats span residues 45–146 (RFQF…IKLL), 150–251 (KLVQ…QGKL), 256–358 (EVQR…ARLD), 361–465 (YRLQ…QYEQ), 468–570 (DLQL…AQLA), 574–676 (HLQQ…KLRE), 679–781 (QQQQ…QKLA), 785–888 (RLQQ…DLED), and 891–961 (QAQQ…QQVA). Ser-587 carries the phosphoserine modification. Position 637 is an N6-acetyllysine (Lys-637). An N6-acetyllysine modification is found at Lys-803. 6 positions are modified to phosphoserine: Ser-924, Ser-982, Ser-999, Ser-1029, Ser-1031, and Ser-1041. An SH3 domain is found at 967-1026 (TGKELVLALYDYQEKSPREVTMKKGDILTLLNSTNKDWWKVEVNDRQGFVPAAYVKKLDP). The Spectrin 10 repeat unit spans residues 1096–1166 (LFREANELQQ…LESEGLMAEE (71 aa)). A Phosphotyrosine modification is found at Tyr-1176. 7 positions are modified to phosphoserine: Ser-1190, Ser-1207, Ser-1217, Ser-1291, Ser-1306, Ser-1323, and Ser-1338. A Spectrin 11 repeat occupies 1233–1336 (HEVQRFHRDA…RADQRKAKLG (104 aa)). Spectrin repeat units lie at residues 1339–1441 (HDLQ…RMML) and 1446–1549 (ELQL…KLGE). Position 1519 is an N6-acetyllysine (Lys-1519). Phosphoserine occurs at positions 1550, 1557, 1578, 1615, and 1647. 7 Spectrin repeats span residues 1552–1656 (TLQQ…KLKE), 1659–1762 (KQQN…KLSE), 1764–1868 (HRLH…RLEE), 1871–1974 (EYQQ…KLDE), 1978–2081 (FLQF…KLLE), 2092–2194 (LFLT…LELQ), and 2206–2310 (LRQE…NLEQ). Thr-2020 bears the Phosphothreonine mark. Lys-2052 is subject to N6-acetyllysine. Thr-2066 is modified (phosphothreonine). 3 consecutive EF-hand domains span residues 2323-2358 (EALK…LGYD), 2366-2401 (EPDP…RETE), and 2404-2439 (KSSE…EQAD). Positions 2336, 2338, 2340, 2342, 2347, 2379, 2381, 2383, 2385, and 2390 each coordinate Ca(2+). Position 2421 is an N6-acetyllysine (Lys-2421).

The protein belongs to the spectrin family. As to quaternary structure, like erythrocyte spectrin, the spectrin-like proteins are capable of forming dimers which can further associate to tetramers. Interacts (via C-terminal spectrin repeats) with TRPC4. Interacts with CALM and EMD. Interacts with isoform 1 of ACP1. Identified in a complex with ACTN4, CASK, IQGAP1, MAGI2, NPHS1 and SPTBN1. Interacts with SHANK3 (via ANK repeats). Interacts with CLN3; this interaction regulates the fodrin localization at the plasma membrane. In terms of processing, phosphorylation of Tyr-1176 decreases sensitivity to cleavage by calpain in vitro.

The protein resides in the cytoplasm. The protein localises to the cytoskeleton. It localises to the cell cortex. Its function is as follows. Fodrin, which seems to be involved in secretion, interacts with calmodulin in a calcium-dependent manner and is thus candidate for the calcium-dependent movement of the cytoskeleton at the membrane. In Mus musculus (Mouse), this protein is Spectrin alpha chain, non-erythrocytic 1 (Sptan1).